Consider the following 387-residue polypeptide: 3-ketoacyl-CoA thiolase (387 aa).

Cysteine 91 functions as the Acyl-thioester intermediate in the catalytic mechanism. Active-site proton acceptor residues include histidine 343 and cysteine 373.

It belongs to the thiolase-like superfamily. Thiolase family. In terms of assembly, heterotetramer of two alpha chains (FadB) and two beta chains (FadA).

It is found in the cytoplasm. The enzyme catalyses an acyl-CoA + acetyl-CoA = a 3-oxoacyl-CoA + CoA. Its pathway is lipid metabolism; fatty acid beta-oxidation. Its function is as follows. Catalyzes the final step of fatty acid oxidation in which acetyl-CoA is released and the CoA ester of a fatty acid two carbons shorter is formed. The chain is 3-ketoacyl-CoA thiolase from Salmonella choleraesuis (strain SC-B67).